The following is a 470-amino-acid chain: Cysteine--tRNA ligase (470 aa).

C28 is a binding site for Zn(2+). Positions 30-40 (PTVYNYIHIGN) match the 'HIGH' region motif. Positions 212, 237, and 241 each coordinate Zn(2+). A 'KMSKS' region motif is present at residues 271–275 (KMSKS). K274 is an ATP binding site.

It belongs to the class-I aminoacyl-tRNA synthetase family. Monomer. It depends on Zn(2+) as a cofactor.

Its subcellular location is the cytoplasm. The catalysed reaction is tRNA(Cys) + L-cysteine + ATP = L-cysteinyl-tRNA(Cys) + AMP + diphosphate. In Levilactobacillus brevis (strain ATCC 367 / BCRC 12310 / CIP 105137 / JCM 1170 / LMG 11437 / NCIMB 947 / NCTC 947) (Lactobacillus brevis), this protein is Cysteine--tRNA ligase.